Consider the following 358-residue polypeptide: Glyoxylate/succinic semialdehyde reductase 2, chloroplastic (358 aa).

Residues 1–44 (MPLVSLSFASSSSKAMALCSICPRIPLRFRPKPISPFLSKPQIC) constitute a chloroplast transit peptide. NADP(+) is bound by residues 70-84 (GFLG…MAQN) and Thr-161. Residue Lys-236 is part of the active site. Residue Lys-304 participates in NADP(+) binding.

Belongs to the HIBADH-related family. NP60 subfamily.

It is found in the plastid. Its subcellular location is the chloroplast stroma. It catalyses the reaction glycolate + NADP(+) = glyoxylate + NADPH + H(+). The catalysed reaction is 4-hydroxybutanoate + NADP(+) = succinate semialdehyde + NADPH + H(+). With respect to regulation, the ratio of NADPH/NADP(+) may regulate enzymatic activity. Functionally, catalyzes the NADPH-dependent reduction of glyoxylate to glycolate as well as succinic semialdehyde (SSA) to gamma-hydroxybutyrate in vitro. May function in redox homeostasis and play a role in oxidative stress tolerance by detoxifying glyoxylate and SSA generated in glycolate metabolism and GABA metabolism, respectively. This chain is Glyoxylate/succinic semialdehyde reductase 2, chloroplastic (GLYR2), found in Arabidopsis thaliana (Mouse-ear cress).